Here is an 85-residue protein sequence, read N- to C-terminus: U4-theraphotoxin-Hhn1j (85 aa).

Positions 1–22 are cleaved as a signal peptide; it reads MKVTLIAILTCAAVLVLHTTAA. A propeptide spanning residues 23-48 is cleaved from the precursor; the sequence is EELEAESQLMEVGMPDTELAAVDEER. Disulfide bonds link C52-C66, C56-C77, and C71-C82.

This sequence belongs to the neurotoxin 12 (Hwtx-2) family. 02 (Hwtx-2) subfamily. As to expression, expressed by the venom gland.

Its subcellular location is the secreted. Postsynaptic neurotoxin. The polypeptide is U4-theraphotoxin-Hhn1j (Cyriopagopus hainanus (Chinese bird spider)).